Consider the following 226-residue polypeptide: Ribonuclease 3 (226 aa).

The 123-residue stretch at 7–129 folds into the RNase III domain; the sequence is LPRLCRTLGY…IIGAIYLDSD (123 aa). E42 lines the Mg(2+) pocket. D46 is an active-site residue. Mg(2+) is bound by residues D115 and E118. Residue E118 is part of the active site. Residues 156–226 enclose the DRBM domain; that stretch reads DAKTLLQEYL…AAQVLELLKK (71 aa).

It belongs to the ribonuclease III family. In terms of assembly, homodimer. Mg(2+) is required as a cofactor.

Its subcellular location is the cytoplasm. It catalyses the reaction Endonucleolytic cleavage to 5'-phosphomonoester.. In terms of biological role, digests double-stranded RNA. Involved in the processing of primary rRNA transcript to yield the immediate precursors to the large and small rRNAs (23S and 16S). Processes some mRNAs, and tRNAs when they are encoded in the rRNA operon. Processes pre-crRNA and tracrRNA of type II CRISPR loci if present in the organism. The sequence is that of Ribonuclease 3 from Shewanella oneidensis (strain ATCC 700550 / JCM 31522 / CIP 106686 / LMG 19005 / NCIMB 14063 / MR-1).